The sequence spans 388 residues: Succinate--CoA ligase [ADP-forming] subunit beta (388 aa).

An ATP-grasp domain is found at 9 to 245; it reads KALLKEYGMP…KSQENERELK (237 aa). Residues Lys46, 53 to 55, Glu100, Tyr103, and Glu108 contribute to the ATP site; that span reads GRG. Mg(2+) contacts are provided by Asn200 and Asp214. Residues Asn265 and 322-324 contribute to the substrate site; that span reads GIV.

Belongs to the succinate/malate CoA ligase beta subunit family. In terms of assembly, heterotetramer of two alpha and two beta subunits. Mg(2+) serves as cofactor.

The enzyme catalyses succinate + ATP + CoA = succinyl-CoA + ADP + phosphate. The catalysed reaction is GTP + succinate + CoA = succinyl-CoA + GDP + phosphate. Its pathway is carbohydrate metabolism; tricarboxylic acid cycle; succinate from succinyl-CoA (ligase route): step 1/1. In terms of biological role, succinyl-CoA synthetase functions in the citric acid cycle (TCA), coupling the hydrolysis of succinyl-CoA to the synthesis of either ATP or GTP and thus represents the only step of substrate-level phosphorylation in the TCA. The beta subunit provides nucleotide specificity of the enzyme and binds the substrate succinate, while the binding sites for coenzyme A and phosphate are found in the alpha subunit. The polypeptide is Succinate--CoA ligase [ADP-forming] subunit beta (Acinetobacter baumannii (strain AB307-0294)).